Here is a 98-residue protein sequence, read N- to C-terminus: NADH-ubiquinone oxidoreductase chain 4L (98 aa).

The next 3 membrane-spanning stretches (helical) occupy residues 1 to 21, 29 to 49, and 61 to 81; these read MSMV…GLLM, SLLC…MTIL, and IILL…LVMV.

It belongs to the complex I subunit 4L family. In terms of assembly, core subunit of respiratory chain NADH dehydrogenase (Complex I) which is composed of 45 different subunits.

It is found in the mitochondrion inner membrane. The catalysed reaction is a ubiquinone + NADH + 5 H(+)(in) = a ubiquinol + NAD(+) + 4 H(+)(out). Core subunit of the mitochondrial membrane respiratory chain NADH dehydrogenase (Complex I) which catalyzes electron transfer from NADH through the respiratory chain, using ubiquinone as an electron acceptor. Part of the enzyme membrane arm which is embedded in the lipid bilayer and involved in proton translocation. This Phocarctos hookeri (Hooker's sea lion) protein is NADH-ubiquinone oxidoreductase chain 4L (MT-ND4L).